The chain runs to 180 residues: Large ribosomal subunit protein uL5 (180 aa).

It belongs to the universal ribosomal protein uL5 family. Part of the 50S ribosomal subunit; part of the 5S rRNA/L5/L18/L25 subcomplex. Contacts the 5S rRNA and the P site tRNA. Forms a bridge to the 30S subunit in the 70S ribosome.

In terms of biological role, this is one of the proteins that bind and probably mediate the attachment of the 5S RNA into the large ribosomal subunit, where it forms part of the central protuberance. In the 70S ribosome it contacts protein S13 of the 30S subunit (bridge B1b), connecting the 2 subunits; this bridge is implicated in subunit movement. Contacts the P site tRNA; the 5S rRNA and some of its associated proteins might help stabilize positioning of ribosome-bound tRNAs. The protein is Large ribosomal subunit protein uL5 of Mycoplasma pneumoniae (strain ATCC 29342 / M129 / Subtype 1) (Mycoplasmoides pneumoniae).